Here is a 323-residue protein sequence, read N- to C-terminus: o-succinylbenzoate synthase (323 aa).

Lys-134 functions as the Proton donor in the catalytic mechanism. The Mg(2+) site is built by Asp-162, Glu-191, and Asp-214. Catalysis depends on Lys-236, which acts as the Proton acceptor.

Belongs to the mandelate racemase/muconate lactonizing enzyme family. MenC type 1 subfamily. It depends on a divalent metal cation as a cofactor.

It carries out the reaction (1R,6R)-6-hydroxy-2-succinyl-cyclohexa-2,4-diene-1-carboxylate = 2-succinylbenzoate + H2O. It functions in the pathway quinol/quinone metabolism; 1,4-dihydroxy-2-naphthoate biosynthesis; 1,4-dihydroxy-2-naphthoate from chorismate: step 4/7. Its pathway is quinol/quinone metabolism; menaquinone biosynthesis. Functionally, converts 2-succinyl-6-hydroxy-2,4-cyclohexadiene-1-carboxylate (SHCHC) to 2-succinylbenzoate (OSB). This chain is o-succinylbenzoate synthase, found in Yersinia pseudotuberculosis serotype IB (strain PB1/+).